A 546-amino-acid polypeptide reads, in one-letter code: Probable protein kinase UbiB (546 aa).

In terms of domain architecture, Protein kinase spans 124–502 (DFSVEPLASA…HVRQGQSRYL (379 aa)). ATP is bound by residues 130-138 (LASASIAQV) and Lys153. The Proton acceptor role is filled by Asp288. 2 helical membrane-spanning segments follow: residues 501 to 521 (YLFG…IHRP) and 522 to 542 (EWGM…LIGW).

The protein belongs to the ABC1 family. UbiB subfamily.

The protein resides in the cell inner membrane. The protein operates within cofactor biosynthesis; ubiquinone biosynthesis [regulation]. Its function is as follows. Is probably a protein kinase regulator of UbiI activity which is involved in aerobic coenzyme Q (ubiquinone) biosynthesis. This chain is Probable protein kinase UbiB, found in Klebsiella pneumoniae subsp. pneumoniae (strain ATCC 700721 / MGH 78578).